The following is an 883-amino-acid chain: MQSYIAVNIDMASLKMLICVCVAILIPSTLSQDSHGIGWNNSPHDTASMDVGKISFSEAIGSGAPKEPQIRNRIFACSSPTGASVARLAQPRHCHRHADSTNMTEGIAVVFKQNIAPYVFNVTLYYKHITTVTTWALFSRPQITNEYVTRVPIDYHEIVRIDRSGECSSKATYHKNFMFFEAYDNDEAEKKLPLVPSLLRSTVSKAFHTTNFTKRHQTLGYRTSTSVDCVVEYLQARSVYPYDYFGMATGDTVEISPFYTKNTTGPRRHSVYRDYRFLEIANYQVRDLETGQIRPPKKRNFLTDEQFTIGWDAMEEKESVCTLSKWIEVPEAVRVSYKNSYHFSLKDMTMTFSSGKQPFNISRLHLAECVPTIASEAIDGIFARKYSSTHVRSGDIEYYLGSGGFLIAFQKLMSHGLAEMYLEEAQRQNHLPRGRERRQAAGRRTASLQSGPQGDRITTHSSATFAMLQFAYDKIQAHVNELIGNLLEAWCELQNRQLIVWHEMKKLNPNSLMTSLFGQPVSARLLGDIVAVSKCIEIPIENIRMQDSMRVPGDPTMCYTRPVLIFRYSSSPESQFSANSTENHNLGILGQLGEHNEILQGRNLIEPCMINHRRYFLLGENYLLYEDYTFVRQVNASEIEEVSTFINLNATILEDLDFVPVEVYTREELRDTGTLNYDDVVRYQNIYNKRFRDIDTVIRGDRGDAIFRAIADFFGNTLGEVGKALGTVVMTAAAAVISTVSGIASFLSNPFAALAIGIAVVVSIILGLLAFKYVMNLKSNPVQVLFPGAVPPAGTPPRPSRRYYKDEEEVEEDSDEDDRILATRVLKGLELLHKDEQKARRQKARFSAFAKNMRNLFRRKPRTKEDDYPLLEYPSWAEESEDE.

An N-terminal signal peptide occupies residues 1-31 (MQSYIAVNIDMASLKMLICVCVAILIPSTLS). At 32–750 (QDSHGIGWNN…SGIASFLSNP (719 aa)) the chain is on the virion surface side. Intrachain disulfides connect cysteine 77–cysteine 535, cysteine 94–cysteine 491, cysteine 167–cysteine 229, cysteine 321–cysteine 369, and cysteine 558–cysteine 608. Residues asparagine 102 and asparagine 121 are each glycosylated (N-linked (GlcNAc...) asparagine; by host). The tract at residues 134–140 (TWALFSR) is involved in fusion and/or binding to host membrane. An N-linked (GlcNAc...) asparagine; by host glycan is attached at asparagine 211. Residues 216–223 (HQTLGYRT) form an involved in fusion and/or binding to host membrane region. N-linked (GlcNAc...) asparagine; by host glycans are attached at residues asparagine 262 and asparagine 360. Residues 428–457 (QNHLPRGRERRQAAGRRTASLQSGPQGDRI) form a disordered region. Residues asparagine 579, asparagine 635, and asparagine 649 are each glycosylated (N-linked (GlcNAc...) asparagine; by host). Hydrophobic membrane proximal region stretches follow at residues 694-748 (IDTV…SFLS) and 724-744 (ALGT…SGIA). Residues 751 to 771 (FAALAIGIAVVVSIILGLLAF) form a helical membrane-spanning segment. The Intravirion segment spans residues 772–883 (KYVMNLKSNP…PSWAEESEDE (112 aa)). The disordered stretch occupies residues 791–817 (PPAGTPPRPSRRYYKDEEEVEEDSDED). The span at 806-817 (DEEEVEEDSDED) shows a compositional bias: acidic residues. The short motif at 868-871 (YPLL) is the Internalization motif element.

This sequence belongs to the herpesviridae glycoprotein B family. Homotrimer; disulfide-linked. Binds to heparan sulfate proteoglycans. Interacts with gH/gL heterodimer. In terms of processing, a proteolytic cleavage by host furin generates two subunits that remain linked by disulfide bonds.

Its subcellular location is the virion membrane. It localises to the host cell membrane. It is found in the host endosome membrane. The protein resides in the host Golgi apparatus membrane. In terms of biological role, envelope glycoprotein that forms spikes at the surface of virion envelope. Essential for the initial attachment to heparan sulfate moieties of the host cell surface proteoglycans. Involved in fusion of viral and cellular membranes leading to virus entry into the host cell. Following initial binding to its host receptors, membrane fusion is mediated by the fusion machinery composed at least of gB and the heterodimer gH/gL. May be involved in the fusion between the virion envelope and the outer nuclear membrane during virion egress. This chain is Envelope glycoprotein B, found in Infectious laryngotracheitis virus (strain SA-2) (ILTV).